A 316-amino-acid chain; its full sequence is Ribose-phosphate pyrophosphokinase (316 aa).

ATP contacts are provided by residues 41-43 (DGE) and 100-101 (RQ). Mg(2+)-binding residues include H134 and D174. K197 is an active-site residue. D-ribose 5-phosphate-binding positions include R199, D223, and 227–231 (DTAGT).

The protein belongs to the ribose-phosphate pyrophosphokinase family. Class I subfamily. Homohexamer. Mg(2+) serves as cofactor.

Its subcellular location is the cytoplasm. The enzyme catalyses D-ribose 5-phosphate + ATP = 5-phospho-alpha-D-ribose 1-diphosphate + AMP + H(+). It functions in the pathway metabolic intermediate biosynthesis; 5-phospho-alpha-D-ribose 1-diphosphate biosynthesis; 5-phospho-alpha-D-ribose 1-diphosphate from D-ribose 5-phosphate (route I): step 1/1. Involved in the biosynthesis of the central metabolite phospho-alpha-D-ribosyl-1-pyrophosphate (PRPP) via the transfer of pyrophosphoryl group from ATP to 1-hydroxyl of ribose-5-phosphate (Rib-5-P). The polypeptide is Ribose-phosphate pyrophosphokinase (Caldanaerobacter subterraneus subsp. tengcongensis (strain DSM 15242 / JCM 11007 / NBRC 100824 / MB4) (Thermoanaerobacter tengcongensis)).